Consider the following 193-residue polypeptide: MHRLPLLLLLGLLLAGSVAPARLVPKRLSQLGGFSWDNCDEGKDPAVIKSLTIQPDPIVVPGDVVVSLEGKTSVPLTAPQKVELTVEKEVAGFWVKIPCVEQLGSCSYENICDLIDEYIPPGESCPEPLHTYGLPCHCPFKEGTYSLPTSNFTVPDLELPSWLSTGNYRIQSILSSGGKRLGCIKIAASLKGR.

Residues 1–20 form the signal peptide; sequence MHRLPLLLLLGLLLAGSVAP. 4 disulfide bridges follow: C39–C183, C99–C106, C112–C138, and C125–C136. An N-linked (GlcNAc...) asparagine glycan is attached at N151.

As to expression, widely expressed. Most abundant in kidney and testis.

It is found in the lysosome. It catalyses the reaction cholesterol(in) = cholesterol(out). In terms of biological role, binds gangliosides and stimulates ganglioside GM2 degradation. It stimulates only the breakdown of ganglioside GM2 and glycolipid GA2 by beta-hexosaminidase A. It extracts single GM2 molecules from membranes and presents them in soluble form to beta-hexosaminidase A for cleavage of N-acetyl-D-galactosamine and conversion to GM3. The large binding pocket can accommodate several single chain phospholipids and fatty acids, GM2A also exhibits some calcium-independent phospholipase activity. Has cholesterol transfer activity. This Mus musculus (Mouse) protein is Ganglioside GM2 activator.